Reading from the N-terminus, the 560-residue chain is 2-succinyl-5-enolpyruvyl-6-hydroxy-3-cyclohexene-1-carboxylate synthase (560 aa).

This sequence belongs to the TPP enzyme family. MenD subfamily. In terms of assembly, homodimer. The cofactor is Mg(2+). It depends on Mn(2+) as a cofactor. Requires thiamine diphosphate as cofactor.

It carries out the reaction isochorismate + 2-oxoglutarate + H(+) = 5-enolpyruvoyl-6-hydroxy-2-succinyl-cyclohex-3-ene-1-carboxylate + CO2. Its pathway is quinol/quinone metabolism; 1,4-dihydroxy-2-naphthoate biosynthesis; 1,4-dihydroxy-2-naphthoate from chorismate: step 2/7. It participates in quinol/quinone metabolism; menaquinone biosynthesis. In terms of biological role, catalyzes the thiamine diphosphate-dependent decarboxylation of 2-oxoglutarate and the subsequent addition of the resulting succinic semialdehyde-thiamine pyrophosphate anion to isochorismate to yield 2-succinyl-5-enolpyruvyl-6-hydroxy-3-cyclohexene-1-carboxylate (SEPHCHC). This chain is 2-succinyl-5-enolpyruvyl-6-hydroxy-3-cyclohexene-1-carboxylate synthase, found in Lactococcus lactis subsp. lactis (strain IL1403) (Streptococcus lactis).